The primary structure comprises 393 residues: Formate-dependent phosphoribosylglycinamide formyltransferase (393 aa).

Residues 20–21 and Glu-80 each bind N(1)-(5-phospho-beta-D-ribosyl)glycinamide; that span reads EL. ATP is bound by residues Arg-112, Lys-153, 158 to 163, 193 to 196, and Glu-201; these read SSGKGQ and EAFI. Positions 117–306 constitute an ATP-grasp domain; sequence RLAAEDLNLP…EFELHVRAVL (190 aa). Mg(2+)-binding residues include Glu-265 and Glu-277. N(1)-(5-phospho-beta-D-ribosyl)glycinamide contacts are provided by residues Asp-284, Lys-354, and 361–362; that span reads RR.

Belongs to the PurK/PurT family. Homodimer.

It carries out the reaction N(1)-(5-phospho-beta-D-ribosyl)glycinamide + formate + ATP = N(2)-formyl-N(1)-(5-phospho-beta-D-ribosyl)glycinamide + ADP + phosphate + H(+). It functions in the pathway purine metabolism; IMP biosynthesis via de novo pathway; N(2)-formyl-N(1)-(5-phospho-D-ribosyl)glycinamide from N(1)-(5-phospho-D-ribosyl)glycinamide (formate route): step 1/1. Involved in the de novo purine biosynthesis. Catalyzes the transfer of formate to 5-phospho-ribosyl-glycinamide (GAR), producing 5-phospho-ribosyl-N-formylglycinamide (FGAR). Formate is provided by PurU via hydrolysis of 10-formyl-tetrahydrofolate. This Syntrophotalea carbinolica (strain DSM 2380 / NBRC 103641 / GraBd1) (Pelobacter carbinolicus) protein is Formate-dependent phosphoribosylglycinamide formyltransferase.